Consider the following 303-residue polypeptide: Putative 1-phosphofructokinase (303 aa).

Residues 217 to 222 (SDGDKG) and 249 to 250 (GD) contribute to the ATP site. The Proton acceptor role is filled by D250.

Belongs to the carbohydrate kinase PfkB family.

The catalysed reaction is beta-D-fructose 1-phosphate + ATP = beta-D-fructose 1,6-bisphosphate + ADP + H(+). Catalyzes the ATP-dependent phosphorylation of fructose-l-phosphate to fructose-l,6-bisphosphate. This is Putative 1-phosphofructokinase (fruK) from Mycoplasma genitalium (strain ATCC 33530 / DSM 19775 / NCTC 10195 / G37) (Mycoplasmoides genitalium).